Here is a 362-residue protein sequence, read N- to C-terminus: 3-dehydroquinate synthase (362 aa).

NAD(+) is bound by residues 71 to 76, 105 to 109, 129 to 130, Lys-142, Lys-151, and 169 to 172; these read DGEQYK, GVIGD, TT, and CLKT. The Zn(2+) site is built by Glu-184, His-247, and His-264.

This sequence belongs to the sugar phosphate cyclases superfamily. Dehydroquinate synthase family. NAD(+) serves as cofactor. Requires Co(2+) as cofactor. Zn(2+) is required as a cofactor.

It localises to the cytoplasm. The enzyme catalyses 7-phospho-2-dehydro-3-deoxy-D-arabino-heptonate = 3-dehydroquinate + phosphate. The protein operates within metabolic intermediate biosynthesis; chorismate biosynthesis; chorismate from D-erythrose 4-phosphate and phosphoenolpyruvate: step 2/7. Functionally, catalyzes the conversion of 3-deoxy-D-arabino-heptulosonate 7-phosphate (DAHP) to dehydroquinate (DHQ). The polypeptide is 3-dehydroquinate synthase (Salmonella typhi).